We begin with the raw amino-acid sequence, 546 residues long: MAKDIEYNETARRKLLEGVNKLANAVKVTLGPKGRNVVIDKKFGAPTITKDGVTVAKEIELEDALENMGAQMVKEVSTKTNDVAGDGTTTATILAQSIINEGLKNVTAGANPMSLKRGIDKAVTAAVESIRKRAVKIENKKDIANVASISANNDDTIGNLIADAMDKVGKDGVITVEEAKSIETTLDVVEGMQFDRGYISPYMVTDAESMVATLSDPYILIYDKKISSMKDLIHILEKVAQAGKPLVIISEEVEGEALATIVVNTLRKTISCVAVKAPGFGDRRKAMLEDIAILTGGQVISEDLGMKLENTTLQMLGRANKVTVDKENTTIIEGKGQTKEIQGRIGQIKKQIEDTTSEYDKEKLQERLAKLAGGVAVIHVGAATEVEMKEKKARVEDALSATRAAVEEGIVPGGGLTLLKAQEAVAALKLEGDEATGAKIIFRSLEEPIRMITNNAGLEGSVIVEHAKTKKGNEGFNALSMVWEDLVSAGVVDPAKVVRSALQNAASIGSMILTTEVTITDKPEKDAPNPMAGMGGGGMGGMGGMM.

Residues 29 to 32, lysine 50, 86 to 90, glycine 414, 477 to 479, and aspartate 493 each bind ATP; these read TLGP, DGTTT, and NAL. The segment at 522–546 is disordered; sequence KPEKDAPNPMAGMGGGGMGGMGGMM. A compositionally biased stretch (gly residues) spans 533-546; it reads GMGGGGMGGMGGMM.

The protein belongs to the chaperonin (HSP60) family. In terms of assembly, forms a cylinder of 14 subunits composed of two heptameric rings stacked back-to-back. Interacts with the co-chaperonin GroES.

Its subcellular location is the cytoplasm. The catalysed reaction is ATP + H2O + a folded polypeptide = ADP + phosphate + an unfolded polypeptide.. Its function is as follows. Together with its co-chaperonin GroES, plays an essential role in assisting protein folding. The GroEL-GroES system forms a nano-cage that allows encapsulation of the non-native substrate proteins and provides a physical environment optimized to promote and accelerate protein folding. This Leptospira borgpetersenii serovar Hardjo-bovis (strain JB197) protein is Chaperonin GroEL.